A 271-amino-acid polypeptide reads, in one-letter code: Glutamate racemase (271 aa).

Substrate-binding positions include 12–13 (DS) and 44–45 (YG). Residue cysteine 75 is the Proton donor/acceptor of the active site. 76–77 (NT) contributes to the substrate binding site. Cysteine 185 serves as the catalytic Proton donor/acceptor. 186 to 187 (TH) provides a ligand contact to substrate.

It belongs to the aspartate/glutamate racemases family.

It catalyses the reaction L-glutamate = D-glutamate. It functions in the pathway cell wall biogenesis; peptidoglycan biosynthesis. Provides the (R)-glutamate required for cell wall biosynthesis. This Mycobacterium marinum (strain ATCC BAA-535 / M) protein is Glutamate racemase.